The following is a 256-amino-acid chain: Ribonuclease HII (256 aa).

One can recognise an RNase H type-2 domain in the interval 67–255; the sequence is QLVGGVDEVG…VSEMVGLKKA (189 aa). 3 residues coordinate a divalent metal cation: aspartate 73, glutamate 74, and aspartate 165.

This sequence belongs to the RNase HII family. Requires Mn(2+) as cofactor. It depends on Mg(2+) as a cofactor.

Its subcellular location is the cytoplasm. The catalysed reaction is Endonucleolytic cleavage to 5'-phosphomonoester.. In terms of biological role, endonuclease that specifically degrades the RNA of RNA-DNA hybrids. This is Ribonuclease HII from Lactobacillus delbrueckii subsp. bulgaricus (strain ATCC 11842 / DSM 20081 / BCRC 10696 / JCM 1002 / NBRC 13953 / NCIMB 11778 / NCTC 12712 / WDCM 00102 / Lb 14).